The sequence spans 507 residues: ATP synthase subunit alpha, chloroplastic (507 aa).

170 to 177 (GDRQTGKT) provides a ligand contact to ATP.

This sequence belongs to the ATPase alpha/beta chains family. F-type ATPases have 2 components, CF(1) - the catalytic core - and CF(0) - the membrane proton channel. CF(1) has five subunits: alpha(3), beta(3), gamma(1), delta(1), epsilon(1). CF(0) has four main subunits: a, b, b' and c.

Its subcellular location is the plastid. The protein resides in the chloroplast thylakoid membrane. The enzyme catalyses ATP + H2O + 4 H(+)(in) = ADP + phosphate + 5 H(+)(out). Its function is as follows. Produces ATP from ADP in the presence of a proton gradient across the membrane. The alpha chain is a regulatory subunit. This is ATP synthase subunit alpha, chloroplastic from Dioscorea elephantipes (Elephant's foot yam).